A 237-amino-acid polypeptide reads, in one-letter code: Ribosomal RNA small subunit methyltransferase G (237 aa).

S-adenosyl-L-methionine is bound by residues G72, L77, 123 to 124 (AE), and R138. Residues 210-237 (TALETGTKAAPSRSPRKPGGRKKRGRKR) form a disordered region. The segment covering 223-237 (SPRKPGGRKKRGRKR) has biased composition (basic residues).

This sequence belongs to the methyltransferase superfamily. RNA methyltransferase RsmG family.

The protein localises to the cytoplasm. In terms of biological role, specifically methylates the N7 position of guanine in position 518 of 16S rRNA. The sequence is that of Ribosomal RNA small subunit methyltransferase G from Thermobifida fusca (strain YX).